Reading from the N-terminus, the 345-residue chain is MSESGIKKLSQERTREWLASQEDEELESIAESSVVDSLDYDYTEEEEDADQNTSEEISTMTLGTQIATKKHSIISDTIRDLMNSINSIQTLGNVNISNSTNVHIGNVTNINGNIQIIADGLTQNRRDRRHVSPPRDNAPKTPTHFEDDYQDESEERVRSDVFIRRQKFKIPKELSAIIPRSSWLAQKPMDEPLPLQLPVKYVVILHTATESSEKRAINVRLIRDMQCFHIESRGWNDIAYNFLVGCDGNIYEGRGWKTVGAHTLGYNRISLGISFIGCFMKELPTADALNMCRNLLARGVEDGHISTDYRLICHCQCNSTESPGRRLYEEIQTWPHFYNIEEEEQ.

The span at methionine 1–glutamate 16 shows a compositional bias: basic and acidic residues. Positions methionine 1–leucine 38 are disordered. 4 N-linked (GlcNAc...) asparagine glycosylation sites follow: asparagine 52, asparagine 95, asparagine 98, and asparagine 106. The disordered stretch occupies residues asparagine 124 to glutamate 152. Residues proline 198 to glycine 324 enclose the N-acetylmuramoyl-L-alanine amidase domain. Residues histidine 206, histidine 229–tyrosine 240, arginine 254, alanine 261–asparagine 267, and histidine 314–serine 322 each bind peptidoglycan. An N-linked (GlcNAc...) asparagine glycan is attached at asparagine 318.

This sequence belongs to the N-acetylmuramoyl-L-alanine amidase 2 family. Monomer. Peptidoglycan binding induces oligomerization. Expressed in hemolymph. Localizes at the lumenal surface of the trachea (at protein level).

The protein resides in the secreted. Functionally, peptidoglycan-recognition protein that plays a key role in innate immunity by binding to murein peptidoglycans (PGN) of Gram-negative bacteria and activating the imd/Relish pathway. Has no activity against on Gram-positive bacteria. Binds to diaminopimelic acid-type PGN (DAP-type PGN), an activator of the imd/Relish pathway. Functions synergistically with PGRP-LC in producing resistance to E.coli and B.megaterium infections, which have the DAP-type peptidoglycan. Acts both upstream and in parallel with PGRP-LC in the imd/Relish pathway, and is required for infection-dependent activation of melanization. Required for Relish processing and nuclear translocation following proteolytic cleavage. Its localization suggests a role in the recognition and subsequent activation of the signaling at the first point of contact with invading bacteria. The protein is Peptidoglycan-recognition protein LE (PGRP-LE) of Drosophila melanogaster (Fruit fly).